The chain runs to 275 residues: Transmembrane protein 106B (275 aa).

The segment at 1 to 24 (MGKSLSHLPLHSNKEDGYDGVTST) is disordered. Gly-2 carries the N-myristoyl glycine lipid modification. Over 2 to 97 (GKSLSHLPLH…QRLRPRRTKL (96 aa)) the chain is Cytoplasmic. Ser-34 bears the Phosphoserine mark. Residues 98 to 118 (YVMASVFVCLLLSGLAVFFLF) traverse the membrane as a helical segment. At 119–275 (PRSIDVKYIG…EYLNVLQPQQ (157 aa)) the chain is on the lumenal side. Residues Asn-146, Asn-152, Asn-165, and Asn-184 are each glycosylated (N-linked (GlcNAc...) asparagine). Cys-215 and Cys-254 form a disulfide bridge. N-linked (GlcNAc...) asparagine glycosylation occurs at Asn-257.

This sequence belongs to the TMEM106 family. As to quaternary structure, can form homomers. Interacts (via N-terminus) with MAP6 (via C-terminus). Interacts (via C-terminus) with the vacuolar-type ATPase subunit ATP6AP1. Interacts (via N-terminus) with AP2M1 and CLTC. Interacts with TMEM106C. In terms of tissue distribution, expressed in cortical neurons (at protein level).

The protein localises to the late endosome membrane. The protein resides in the lysosome membrane. It localises to the cell membrane. Functionally, involved in dendrite morphogenesis and maintenance by regulating lysosomal trafficking. May act as a molecular brake for retrograde transport of late endosomes/lysosomes, possibly via its interaction with MAP6. In neurons, may also play a role in the regulation of lysosomal size and responsiveness to stress. Required for proper lysosomal acidification. In terms of biological role, in neurons, involved in the transport of late endosomes/lysosomes. May be involved in dendrite morphogenesis and maintenance by regulating lysosomal trafficking. May act as a molecular brake for retrograde transport of late endosomes/lysosomes, possibly via its interaction with MAP6. In motoneurons, may mediate the axonal transport of lysosomes and axonal sorting at the initial segment. It remains unclear whether TMEM106B affects the transport of moving lysosomes in the anterograde or retrograde direction in neurites and whether it is particularly important in the sorting of lysosomes in axons or in dendrites. In neurons, may also play a role in the regulation of lysosomal size and responsiveness to stress. Required for proper lysosomal acidification. The polypeptide is Transmembrane protein 106B (Tmem106b) (Rattus norvegicus (Rat)).